Here is a 154-residue protein sequence, read N- to C-terminus: Small ribosomal subunit protein uS11c (154 aa).

The protein belongs to the universal ribosomal protein uS11 family. Part of the 30S ribosomal subunit.

The protein resides in the plastid. The sequence is that of Small ribosomal subunit protein uS11c from Helicosporidium sp. subsp. Simulium jonesii (Green alga).